The primary structure comprises 225 residues: LysM and putative peptidoglycan-binding domain-containing protein 1 (225 aa).

Phosphoserine is present on residues serine 23 and serine 33. The LysM domain maps to 40 to 84 (LEHQLAPGDTLAGLALKYGVTMEQIKRANRLYTNDSIFLKKTLHI). The interval 97-153 (LDSEEEKDGEEAVQPSKDEVRPHSAERKKRERGLGHANGEPLPTAGQEPARHDLSAS) is disordered. Residues 98-107 (DSEEEKDGEE) are compositionally biased toward acidic residues. Serine 99 carries the post-translational modification Phosphoserine. Residues 112 to 121 (SKDEVRPHSA) show a composition bias toward basic and acidic residues. A phosphoserine mark is found at serine 164, serine 179, serine 192, and serine 210. The disordered stretch occupies residues 170–225 (AAQKLKKGESGIPGEDSSLHLSSPRMQQRAVLGPVPLTQTSRTRTLRDQEDEIFKL). A compositionally biased stretch (basic and acidic residues) spans 214-225 (TLRDQEDEIFKL).

The polypeptide is LysM and putative peptidoglycan-binding domain-containing protein 1 (LYSMD1) (Bos taurus (Bovine)).